The primary structure comprises 285 residues: Ribosomal RNA small subunit methyltransferase H (285 aa).

S-adenosyl-L-methionine contacts are provided by residues 34 to 36 (AGH), Asp51, Phe75, Asp96, and His103. The disordered stretch occupies residues 259–285 (LVPSEKEAAQNPRARSAKLRAAEKEAP).

The protein belongs to the methyltransferase superfamily. RsmH family.

It localises to the cytoplasm. The catalysed reaction is cytidine(1402) in 16S rRNA + S-adenosyl-L-methionine = N(4)-methylcytidine(1402) in 16S rRNA + S-adenosyl-L-homocysteine + H(+). In terms of biological role, specifically methylates the N4 position of cytidine in position 1402 (C1402) of 16S rRNA. This is Ribosomal RNA small subunit methyltransferase H from Thermus thermophilus (strain ATCC 27634 / DSM 579 / HB8).